We begin with the raw amino-acid sequence, 859 residues long: Homeobox-leucine zipper protein HOX32 (859 aa).

A disordered region spans residues 7–31 (AAVHGVGRQDRSSPGGGGAPQVDTG). The homeobox DNA-binding region spans 29–92 (DTGKYVRYTP…NRRCREKQRK (64 aa)). The stretch at 100 to 129 (VNRKLTAMNKLLMEENDRLQKQVSRLVYEN) forms a coiled coil. Positions 146 to 164 (TSCESVVTSGQHHQQQNPA) are enriched in polar residues. Positions 146-172 (TSCESVVTSGQHHQQQNPAATRPQRDA) are disordered. One can recognise an START domain in the interval 171 to 393 (DANNPAGLLA…LRHIRQIAHE (223 aa)).

It belongs to the HD-ZIP homeobox family. Class III subfamily. In terms of tissue distribution, expressed in seedlings, roots, stems, leaf sheaths and blades and panicles.

It localises to the nucleus. In terms of biological role, probable transcription factor. This Oryza sativa subsp. japonica (Rice) protein is Homeobox-leucine zipper protein HOX32 (HOX32).